A 414-amino-acid polypeptide reads, in one-letter code: MENKSPSKKNKPPSCGSLVTILSLDGGGVRGIIAGVILAFLEKQLQELDGEEARLADYFDVIAGTSTGGLVTAMLTVPDETGRPHFAAKDIVPFYLEHCPKIFPQPTGVLALLPKLPKLLSGPKYSGKYLRNLLSKLLGETRLHQTLTNIVIPTFDIKKLQPTIFSSYQLLVDPSLDVKVSDICIGTSAAPTFFPPHYFSNEDSQGNKTEFNLVDGAVTANNPTLVAMTAVSKQIVKNNPDMGKLKPLGFDRFLVISIGTGSTKREEKYSAKKAAKWGIISWLYDDGSTPILDITMESSRDMIHYHSSVVFKALQSEDKYLRIDDDTLEGDVSTMDLATKSNLENLQKIGEKMLTNRVMQMNIDTGVYEPVAENITNDEQLKRYAKILSDERKLRRLRSDTMIKDSSNESQEIK.

A PNPLA domain is found at 22-228 (LSLDGGGVRG…TANNPTLVAM (207 aa)). The short motif at 26-31 (GGGVRG) is the GXGXXG element. The GXSXG signature appears at 64-68 (GTSTG). The Nucleophile role is filled by Ser66. Asp215 functions as the Proton acceptor in the catalytic mechanism. Residues 215 to 217 (DGA) carry the DGA/G motif. Position 399 is a phosphoserine (Ser399).

This sequence belongs to the patatin family. Post-translationally, phosphorylated at Ser-399 by CPK3. Phosphorylation enhances PLP1 activity towards phosphatidylcholine. Expressed specifically in roots and root hairs.

It is found in the cytoplasm. Possesses non-specific lipolytic acyl hydrolase (LAH) activity. Catalyzes the hydrolysis of the neutral lipids monogalactosyldiacylglycerol (MGDG), digalactosyldiacylglycerol (DGDG) and phosphatidylglycerol (PG), and less efficiently the polar lipids phosphatidylcholine (PC) and phosphatidylinositol (PI), but not the storage lipid triacylglycerol (TAG). May play a role in root development. This chain is Patatin-like protein 1 (PLP1), found in Arabidopsis thaliana (Mouse-ear cress).